The chain runs to 866 residues: Autophagy-related protein 9 (866 aa).

Topologically, residues 1–94 are cytoplasmic; the sequence is MMSSGHKGPN…KGLWCIIVKW (94 aa). A helical membrane pass occupies residues 95 to 115; the sequence is AVELLSLGFIICFSGFFLLYV. Residues 116 to 153 lie on the Lumenal side of the membrane; the sequence is DWNGLQNAKCGMDAVESGTKPCDLVKEAIHPHPLSPFT. A helical membrane pass occupies residues 154–174; it reads LTTAIIVGYLALFSVYWLFCF. At 175-319 the chain is on the cytoplasmic side; sequence LRFFAQLKDT…VSNPTTLKKR (145 aa). The stretch at 320-340 is an intramembrane region; that stretch reads LFVVGLAMLLLSPFLVIFMLV. Over 341–404 the chain is Cytoplasmic; sequence YLFLRHAEQF…LKQFPSPIIS (64 aa). Residues 405-425 traverse the membrane as a helical segment; the sequence is IIAKFVSFVSGGFAAVLIIIA. Residues 426–433 are Lumenal-facing; the sequence is FLEESLLE. The chain crosses the membrane as a helical span at residues 434–454; that stretch reads GHIFGRNLFWYAAVFGTITAI. Topologically, residues 455–507 are cytoplasmic; sequence SRAAISDELLVLDPVGTMSLVVQNTHYMPKRWRGKENKDDVRLELETLFQYTG. An intramembrane segment occupies 508–528; the sequence is MMLLEEIASIFITPFLLMFVV. At 529-866 the chain is on the cytoplasmic side; sequence PKRVDDILQF…ETSTSSTTLR (338 aa). Residues 744–781 form a disordered region; the sequence is QPEGEDSYGSQHPLDGRNQWWGRGNHSQISTAHPATTN. The segment covering 768 to 781 has biased composition (polar residues); that stretch reads NHSQISTAHPATTN.

The protein belongs to the ATG9 family. In terms of assembly, homotrimer; forms a homotrimer with a central pore that forms a path between the two membrane leaflets. Expressed in roots, leaves, stems and flowers.

It localises to the preautophagosomal structure membrane. In terms of biological role, phospholipid scramblase involved in autophagy by mediating autophagosomal membrane expansion. Cycles between the preautophagosomal structure/phagophore assembly site (PAS) and the cytoplasmic vesicle pool and supplies membrane for the growing autophagosome. Lipid scramblase activity plays a key role in preautophagosomal structure/phagophore assembly by distributing the phospholipids that arrive through ATG2 from the cytoplasmic to the luminal leaflet of the bilayer, thereby driving autophagosomal membrane expansion. In addition to autophagy, also plays a role in necrotic cell death. Plays an essential role in plant nutrient recycling. In Arabidopsis thaliana (Mouse-ear cress), this protein is Autophagy-related protein 9.